Reading from the N-terminus, the 449-residue chain is MFS-type transporter 1 (449 aa).

The segment covering 1-37 (MTHSSSNEHEKEDDRRASDDMMDRDDQNAKEEQDVSK) has biased composition (basic and acidic residues). A disordered region spans residues 1 to 43 (MTHSSSNEHEKEDDRRASDDMMDRDDQNAKEEQDVSKDAPPVN). 6 helical membrane-spanning segments follow: residues 61–81 (VAGG…IGIF), 97–117 (TISW…LVVG), 127–147 (YILL…SLST), 152–172 (ILLS…TPAV), 185–205 (LANG…PIMF), and 212–232 (VGFP…LIIA). Residue Asn-233 is glycosylated (N-linked (GlcNAc...) asparagine). 6 helical membrane passes run 262–282 (LLTT…INYI), 298–318 (YLIP…GFVA), 326–346 (VHTF…LPAA), 349–369 (APII…VAIL), 390–410 (FGVL…FVAH), and 420–440 (IWTG…RISL).

This sequence belongs to the major facilitator superfamily. Monocarboxylate porter (TC 2.A.1.13) family.

Its subcellular location is the cell membrane. The catalysed reaction is erythrostominone(in) = erythrostominone(out). It catalyses the reaction deoxyerythrostominone(in) = deoxyerythrostominone(out). The enzyme catalyses epierythrostominol(in) = epierythrostominol(out). It carries out the reaction deoxyerythrostominol(in) = deoxyerythrostominol(out). Its function is as follows. MFS-type transporter that mediates the secretion of the 4 major naphthoquinone derivatives produced, erythrostominone (NQ1), deoxyerythrostominone (NQ2), epierythrostominol (NQ4), and deoxyerythrostominol (NQ5), as well as of 3 newly identified naphthoquinone derivatives termed NQ7, NQ8 and NQ9. This is MFS-type transporter 1 from Ophiocordyceps sp. (strain BCC 1869) (Entomopathogenic fungus).